We begin with the raw amino-acid sequence, 361 residues long: Phosphoserine aminotransferase (361 aa).

Residue arginine 43 coordinates L-glutamate. Pyridoxal 5'-phosphate-binding positions include 77-78 (AS), tryptophan 103, threonine 153, aspartate 173, and glutamine 196. Position 197 is an N6-(pyridoxal phosphate)lysine (lysine 197). 238 to 239 (NT) is a pyridoxal 5'-phosphate binding site.

It belongs to the class-V pyridoxal-phosphate-dependent aminotransferase family. SerC subfamily. Homodimer. It depends on pyridoxal 5'-phosphate as a cofactor.

The protein localises to the cytoplasm. The catalysed reaction is O-phospho-L-serine + 2-oxoglutarate = 3-phosphooxypyruvate + L-glutamate. It catalyses the reaction 4-(phosphooxy)-L-threonine + 2-oxoglutarate = (R)-3-hydroxy-2-oxo-4-phosphooxybutanoate + L-glutamate. The protein operates within amino-acid biosynthesis; L-serine biosynthesis; L-serine from 3-phospho-D-glycerate: step 2/3. It functions in the pathway cofactor biosynthesis; pyridoxine 5'-phosphate biosynthesis; pyridoxine 5'-phosphate from D-erythrose 4-phosphate: step 3/5. Its function is as follows. Catalyzes the reversible conversion of 3-phosphohydroxypyruvate to phosphoserine and of 3-hydroxy-2-oxo-4-phosphonooxybutanoate to phosphohydroxythreonine. The sequence is that of Phosphoserine aminotransferase from Pseudomonas putida (strain ATCC 47054 / DSM 6125 / CFBP 8728 / NCIMB 11950 / KT2440).